The following is a 706-amino-acid chain: Polyribonucleotide nucleotidyltransferase (706 aa).

Mg(2+)-binding residues include D490 and D496. A KH domain is found at 556–615; it reads PRIETMQIPTDKIREVIGSGGKVIREIVEVSGAKVDINDEGIIKIASPNGDSIQKAYDMI. Positions 625 to 693 constitute an S1 motif domain; that stretch reads GKIYKGKVVK…DRGKVRLAMK (69 aa).

It belongs to the polyribonucleotide nucleotidyltransferase family. The cofactor is Mg(2+).

Its subcellular location is the cytoplasm. It carries out the reaction RNA(n+1) + phosphate = RNA(n) + a ribonucleoside 5'-diphosphate. Its function is as follows. Involved in mRNA degradation. Catalyzes the phosphorolysis of single-stranded polyribonucleotides processively in the 3'- to 5'-direction. In Jannaschia sp. (strain CCS1), this protein is Polyribonucleotide nucleotidyltransferase.